Consider the following 456-residue polypeptide: General transcription factor IIE subunit 1 (456 aa).

The region spanning 11-100 is the HTH TFE/IIEalpha-type domain; it reads LDDLVKMVIR…LWYIDYKHII (90 aa). The C4-type zinc-finger motif lies at 129–157; sequence CQTCHKVYTALDIPKLLNMDTGALACEIC. The disordered stretch occupies residues 345–402; sequence ESAPDSGDADGNGSNSGSGGSTIEGNDGGNGEHQNKKMKLDDSQTVSSMSQSDDDGKD. Residues 347-357 show a composition bias toward low complexity; the sequence is APDSGDADGNG. A compositionally biased stretch (gly residues) spans 358–375; sequence SNSGSGGSTIEGNDGGNG. A compositionally biased stretch (basic and acidic residues) spans 377–386; the sequence is HQNKKMKLDD.

This sequence belongs to the TFIIE alpha subunit family. As to quaternary structure, TFIIE is a tetramer of two alpha and two beta subunits.

The protein resides in the nucleus. Recruits TFIIH to the initiation complex and stimulates the RNA polymerase II C-terminal domain kinase and DNA-dependent ATPase activities of TFIIH. Both TFIIH and TFIIE are required for promoter clearance by RNA polymerase. This Dictyostelium discoideum (Social amoeba) protein is General transcription factor IIE subunit 1 (gtf2e1-1).